Here is an 801-residue protein sequence, read N- to C-terminus: Heavy metal tolerance factor 1 (801 aa).

Over methionine 1–lysine 24 the chain is Lumenal. A helical transmembrane segment spans residues isoleucine 25–proline 45. The Cytoplasmic segment spans residues asparagine 46–serine 75. The helical transmembrane segment at isoleucine 76–phenylalanine 96 threads the bilayer. The Lumenal segment spans residues histidine 97 to histidine 101. Residues leucine 102–serine 122 form a helical membrane-spanning segment. The Cytoplasmic portion of the chain corresponds to lysine 123–serine 129. A helical membrane pass occupies residues threonine 130–threonine 150. Residues aspartate 151–threonine 167 are Lumenal-facing. A helical membrane pass occupies residues phenylalanine 168–leucine 188. The Cytoplasmic segment spans residues phenylalanine 189–arginine 226. The chain crosses the membrane as a helical span at residues valine 227–leucine 247. Positions valine 227–lysine 516 constitute an ABC transmembrane type-1 domain. At serine 248 to serine 264 the chain is on the lumenal side. Residues leucine 265–leucine 285 form a helical membrane-spanning segment. Residues asparagine 286–asparagine 341 lie on the Cytoplasmic side of the membrane. The chain crosses the membrane as a helical span at residues isoleucine 342 to phenylalanine 364. The Lumenal segment spans residues phenylalanine 365–tyrosine 371. A helical transmembrane segment spans residues phenylalanine 372–isoleucine 390. The Cytoplasmic segment spans residues threonine 391 to asparagine 461. Residues alanine 462–glutamate 482 form a helical membrane-spanning segment. Residues lysine 483–aspartate 489 are Lumenal-facing. The helical transmembrane segment at tyrosine 490–isoleucine 510 threads the bilayer. The Cytoplasmic segment spans residues tyrosine 511–proline 801. An ABC transporter domain is found at isoleucine 550–alanine 784. ATP is bound at residue glycine 583–serine 590.

This sequence belongs to the ABC transporter superfamily. ABCB family. Heavy Metal importer (TC 3.A.1.210) subfamily. As to expression, expressed in coelomocytes, as well as in head and tail neurons, and in the intestinal cells.

Its subcellular location is the vacuole membrane. The protein resides in the early endosome. The protein localises to the late endosome. It is found in the recycling endosome. In terms of biological role, may play a pivotal role in the detoxification of heavy metals such as cadmium but do not depend exclusively on phytochelatins (PC) synthesis. The polypeptide is Heavy metal tolerance factor 1 (Caenorhabditis elegans).